We begin with the raw amino-acid sequence, 82 residues long: Translational regulator CsrA (82 aa).

The protein belongs to the CsrA/RsmA family. As to quaternary structure, homodimer; the beta-strands of each monomer intercalate to form a hydrophobic core, while the alpha-helices form wings that extend away from the core.

It is found in the cytoplasm. A translational regulator that binds mRNA to regulate translation initiation and/or mRNA stability. Usually binds in the 5'-UTR at or near the Shine-Dalgarno sequence preventing ribosome-binding, thus repressing translation. Its main target seems to be the major flagellin gene, while its function is anatagonized by FliW. This Brachyspira hyodysenteriae (strain ATCC 49526 / WA1) protein is Translational regulator CsrA.